A 561-amino-acid chain; its full sequence is Glucose-6-phosphate isomerase (561 aa).

D-glucose 6-phosphate is bound by residues 171 to 172, 222 to 227, Gln-366, Glu-370, His-401, and Lys-525; these read GS and SKTFTT. Catalysis depends on Glu-370, which acts as the Proton donor. Catalysis depends on residues His-401 and Lys-525.

This sequence belongs to the GPI family. In terms of assembly, homodimer.

The protein resides in the cytoplasm. It is found in the cytosol. The enzyme catalyses alpha-D-glucose 6-phosphate = beta-D-fructose 6-phosphate. It functions in the pathway carbohydrate degradation; glycolysis; D-glyceraldehyde 3-phosphate and glycerone phosphate from D-glucose: step 2/4. In the cytoplasm, catalyzes the conversion of glucose-6-phosphate to fructose-6-phosphate, the second step in glycolysis, and the reverse reaction during gluconeogenesis. The protein is Glucose-6-phosphate isomerase (pgi-1) of Neurospora crassa (strain ATCC 24698 / 74-OR23-1A / CBS 708.71 / DSM 1257 / FGSC 987).